Reading from the N-terminus, the 266-residue chain is Putative carbamate hydrolase RutD (266 aa).

The AB hydrolase-1 domain occupies 14–115 (PVVVLISGLG…TVLISVNGWL (102 aa)).

This sequence belongs to the AB hydrolase superfamily. Hydrolase RutD family.

It carries out the reaction carbamate + 2 H(+) = NH4(+) + CO2. In terms of biological role, involved in pyrimidine catabolism. May facilitate the hydrolysis of carbamate, a reaction that can also occur spontaneously. In Shigella sonnei (strain Ss046), this protein is Putative carbamate hydrolase RutD.